The chain runs to 461 residues: Ribitol-5-phosphate transferase FKTN (461 aa).

At 1 to 7 the chain is on the cytoplasmic side; it reads MSRINKN. The required and sufficient for interaction with POMGNT1 stretch occupies residues 6–27; the sequence is KNVVLALLTLTSSAFLLFQLYY. The chain crosses the membrane as a helical; Signal-anchor for type II membrane protein span at residues 8-28; sequence VVLALLTLTSSAFLLFQLYYY. Residues 29-461 lie on the Lumenal side of the membrane; that stretch reads KHYLSTRNGA…SEWDEVIQLY (433 aa). N92 is a glycosylation site (N-linked (GlcNAc...) asparagine).

Belongs to the LicD transferase family. Forms a complex composed of FKTN/fukutin, FKRP and RXYLT1/TMEM5. Interacts (via transmembrane domain) with POMGNT1; the interaction is direct and is required for normal POMGNT1 location in Golgi membranes. In terms of tissue distribution, expressed in the retina (at protein level).

Its subcellular location is the golgi apparatus membrane. The protein localises to the cytoplasm. It localises to the nucleus. The enzyme catalyses 3-O-[beta-D-GalNAc-(1-&gt;3)-beta-D-GlcNAc-(1-&gt;4)-(O-6-P-alpha-D-Man)]-Thr-[protein] + CDP-L-ribitol = 3-O-[Rib-ol-P-3-beta-D-GalNAc-(1-&gt;3)-beta-D-GlcNAc-(1-&gt;4)-(O-6-P-alpha-D-Man)]-Thr-[protein] + CMP + H(+). It functions in the pathway protein modification; protein glycosylation. Its function is as follows. Catalyzes the transfer of CDP-ribitol to the distal N-acetylgalactosamine of the phosphorylated O-mannosyl trisaccharide (N-acetylgalactosamine-beta-3-N-acetylglucosamine-beta-4-(phosphate-6-)mannose), a carbohydrate structure present in alpha-dystroglycan (DAG1). This constitutes the first step in the formation of the ribitol 5-phosphate tandem repeat which links the phosphorylated O-mannosyl trisaccharide to the ligand binding moiety composed of repeats of 3-xylosyl-alpha-1,3-glucuronic acid-beta-1. May interact with and reinforce a large complex encompassing the outside and inside of muscle membranes. Could be involved in brain development. The sequence is that of Ribitol-5-phosphate transferase FKTN from Macaca fascicularis (Crab-eating macaque).